A 217-amino-acid polypeptide reads, in one-letter code: Somatotropin (217 aa).

Positions 1–26 (MATGSRTSLLLAFGLLCLPWLQEGSA) are cleaved as a signal peptide. A Zn(2+)-binding site is contributed by histidine 44. Residues cysteine 79 and cysteine 191 are joined by a disulfide bond. Serine 132 carries the post-translational modification Phosphoserine. The residue at position 163 (glutamine 163) is a Deamidated glutamine; by deterioration. Position 176 is a phosphoserine (serine 176). Asparagine 178 is modified (deamidated asparagine; by deterioration). Zn(2+) is bound at residue glutamate 200. A disulfide bond links cysteine 208 and cysteine 215.

It belongs to the somatotropin/prolactin family. In terms of assembly, monomer, dimer, trimer, tetramer and pentamer, disulfide-linked or non-covalently associated, in homomeric and heteromeric combinations. Can also form a complex either with GHBP or with the alpha2-macroglobulin complex.

The protein localises to the secreted. In terms of biological role, plays an important role in growth control. Its major role in stimulating body growth is to stimulate the liver and other tissues to secrete IGF1. It stimulates both the differentiation and proliferation of myoblasts. It also stimulates amino acid uptake and protein synthesis in muscle and other tissues. The sequence is that of Somatotropin (GH1) from Homo sapiens (Human).